We begin with the raw amino-acid sequence, 391 residues long: BRCA1-A complex subunit Abraxas 1 (391 aa).

The 149-residue stretch at 8–156 (VRISGFVLSS…THRLEFSAFI (149 aa)) folds into the MPN domain. Residues 223–261 (LLAEMQKVCVEVEKSERTVEKLQEDIAQLKEAIGKQKTH) adopt a coiled-coil conformation. Positions 354-391 (QRLKRKRKTREVSESASESGSDTEIEMNGQSGSNSPVF) are disordered. Residues 367-391 (ESASESGSDTEIEMNGQSGSNSPVF) show a composition bias toward polar residues. Ser-388 is modified (phosphoserine). The short motif at 388 to 391 (SPVF) is the pSXXF motif element.

Belongs to the FAM175 family. Abraxas subfamily. As to quaternary structure, component of the ARISC complex. Component of the BRCA1-A complex. Homodimer. Post-translationally, phosphorylation of Ser-388 of the pSXXF motif by ATM or ATR constitutes a specific recognition motif for the BRCT domain of BRCA1.

The protein resides in the nucleus. In terms of biological role, involved in DNA damage response and double-strand break (DSB) repair. Component of the BRCA1-A complex, acting as a central scaffold protein that assembles the various components of the complex. The BRCA1-A complex specifically recognizes 'Lys-63'-linked ubiquitinated histones H2A and H2AX at DNA lesion sites. This complex also possesses deubiquitinase activity that specifically removes 'Lys-63'-linked ubiquitin on histones H2A and H2AX. The sequence is that of BRCA1-A complex subunit Abraxas 1 from Danio rerio (Zebrafish).